We begin with the raw amino-acid sequence, 195 residues long: Imidazoleglycerol-phosphate dehydratase (195 aa).

Belongs to the imidazoleglycerol-phosphate dehydratase family.

It localises to the cytoplasm. The enzyme catalyses D-erythro-1-(imidazol-4-yl)glycerol 3-phosphate = 3-(imidazol-4-yl)-2-oxopropyl phosphate + H2O. Its pathway is amino-acid biosynthesis; L-histidine biosynthesis; L-histidine from 5-phospho-alpha-D-ribose 1-diphosphate: step 6/9. In Geobacillus sp. (strain WCH70), this protein is Imidazoleglycerol-phosphate dehydratase.